We begin with the raw amino-acid sequence, 271 residues long: Shikimate dehydrogenase (NADP(+)) (271 aa).

Residues Ser19–Ser21 and Thr65 contribute to the shikimate site. The active-site Proton acceptor is the Lys69. Glu81 provides a ligand contact to NADP(+). The shikimate site is built by Asn90 and Asp105. NADP(+)-binding positions include Gly128–Ala132, Asn150–Lys155, and Ile211. Tyr213 is a binding site for shikimate. Gly234 lines the NADP(+) pocket.

Belongs to the shikimate dehydrogenase family. Homodimer.

The enzyme catalyses shikimate + NADP(+) = 3-dehydroshikimate + NADPH + H(+). The protein operates within metabolic intermediate biosynthesis; chorismate biosynthesis; chorismate from D-erythrose 4-phosphate and phosphoenolpyruvate: step 4/7. Functionally, involved in the biosynthesis of the chorismate, which leads to the biosynthesis of aromatic amino acids. Catalyzes the reversible NADPH linked reduction of 3-dehydroshikimate (DHSA) to yield shikimate (SA). The protein is Shikimate dehydrogenase (NADP(+)) of Pyrococcus furiosus (strain ATCC 43587 / DSM 3638 / JCM 8422 / Vc1).